We begin with the raw amino-acid sequence, 146 residues long: Anti-sigma F factor (146 aa).

It belongs to the anti-sigma-factor family.

It catalyses the reaction L-seryl-[protein] + ATP = O-phospho-L-seryl-[protein] + ADP + H(+). It carries out the reaction L-threonyl-[protein] + ATP = O-phospho-L-threonyl-[protein] + ADP + H(+). In terms of biological role, binds to sigma F and blocks its ability to form an RNA polymerase holoenzyme (E-sigma F). Phosphorylates SpoIIAA on a serine residue. This phosphorylation may enable SpoIIAA to act as an anti-anti-sigma factor that counteracts SpoIIAB and thus releases sigma F from inhibition. The protein is Anti-sigma F factor of Halalkalibacterium halodurans (strain ATCC BAA-125 / DSM 18197 / FERM 7344 / JCM 9153 / C-125) (Bacillus halodurans).